A 660-amino-acid chain; its full sequence is DNA mismatch repair protein MutL (660 aa).

The disordered stretch occupies residues Ser-414–Asn-433.

This sequence belongs to the DNA mismatch repair MutL/HexB family.

In terms of biological role, this protein is involved in the repair of mismatches in DNA. It is required for dam-dependent methyl-directed DNA mismatch repair. May act as a 'molecular matchmaker', a protein that promotes the formation of a stable complex between two or more DNA-binding proteins in an ATP-dependent manner without itself being part of a final effector complex. The protein is DNA mismatch repair protein MutL of Streptococcus pyogenes serotype M5 (strain Manfredo).